An 826-amino-acid polypeptide reads, in one-letter code: Protein lozenge (826 aa).

Disordered stretches follow at residues M1 to T45, P87 to S171, and A214 to N263. Residues P12–S24 are compositionally biased toward pro residues. Over residues S106–P141 the composition is skewed to basic residues. Residues P142–P153 show a composition bias toward pro residues. Over residues V156–S171 the composition is skewed to polar residues. The Runt domain occupies L275–S403. Positions Q774–G798 are enriched in low complexity. The segment at Q774 to Y826 is disordered.

As to expression, expressed in the pupal eye during programmed cell death.

The protein localises to the nucleus. In terms of biological role, involved in prepatterning photoreceptor precursors in the developing eye; in the larval eye disk it defines a subset of cells as an equipotential group that is competent to respond to the sevenless developmental signal and another subset that confer proper photoreceptor identity by positively regulating the homeo box gene Bar. Involved in the aop/pnt dynamic in a Ras-dependent manner to regulate pros expression. Promotes apoptosis in the pupal eye by directly activating aos and klu. Also modulates hid- and rpr-mediated cell death. Regulates amos function in olfactory sensilla development. This Drosophila melanogaster (Fruit fly) protein is Protein lozenge (lz).